We begin with the raw amino-acid sequence, 884 residues long: MTDVTVKSLAAEIQTPVDRLVQQFADAGIKKSDVDSVTQQEKEILLAHLNREHGSVPNKLTLQRKTRSTLNIPSTGGKSKSVQIEVRKKRTYVNTPEAEQAKAEEQAQREAEATAQKIAEEKAKREAEEQAKREAAEKAKRQAAEKEKVTNQQTDEKTKPAQTDKARREAEAAELKRSVEEETRRKVEEDAKRVAEEARKMAAENEGKWPEPVAEQTESADYHVTTSQHARAAEDENDAKVEGDRRSRTRGGKATKQKKGNKLSESKADREEARAVGRKGKRKPSTLQQSFNKPVVAVNRDVVIGETVTVAELANKMAVKGSQVIKAMMKLGAMATINQVIDQETAQLVAEEMGHKVILRRENELEEALMSDRDIGVEAAAEHRAPVVTIMGHVDHGKTSLLDYIRSTKVASGEAGGITQHIGAYHVETENGMITFLDTPGHAAFTSMRARGAQATDIVVLVVAADDGVMPQTIEAIQHAKAANVPVVVAVNKIDKPEADPDRVKTELSQYGIQPEEWGGESQFINVSAKAGIGIDELLNAILLQAEVLELKAVRTGMANGVVIESFLDKGRGPVATVLVQQGTLNKGDIVLCGFEYGRVRAMRDELGRDITSVGPSIPVEILGLSSVPAAGDEVTVVRDEKKAREVALYRQGKFREVKLARQQKSKLENMFANMTEGEVSELNIVIKSDVQGSCEAICDSLEKLSTDEVKVRIVGSGVGGITETDATLAAASGAIILGFNVRADASARRVVETEGLDLRYYSVIYSLIDEVKQAMSGMLAPEYKQQIIGLAEVRDVFKSPKFGAIAGCMVTEGVIKRNNPIRVLRDNVVIYEGELESLRRFKDDVSEVRNGMECGIGVKNYNDVRTGDVIEVFEIIEIKRTIA.

The segment at 93–288 (VNTPEAEQAK…KGKRKPSTLQ (196 aa)) is disordered. Over residues 99–209 (EQAKAEEQAQ…KMAAENEGKW (111 aa)) the composition is skewed to basic and acidic residues. Residues 216–229 (QTESADYHVTTSQH) show a composition bias toward polar residues. Over residues 231-246 (RAAEDENDAKVEGDRR) the composition is skewed to basic and acidic residues. The segment covering 247 to 261 (SRTRGGKATKQKKGN) has biased composition (basic residues). The segment covering 262–275 (KLSESKADREEARA) has biased composition (basic and acidic residues). Residues 383–552 (HRAPVVTIMG…LLQAEVLELK (170 aa)) form the tr-type G domain. The G1 stretch occupies residues 392–399 (GHVDHGKT). 392–399 (GHVDHGKT) provides a ligand contact to GTP. A G2 region spans residues 417-421 (GITQH). The interval 438-441 (DTPG) is G3. Residues 438-442 (DTPGH) and 492-495 (NKID) contribute to the GTP site. Residues 492–495 (NKID) form a G4 region. Positions 528–530 (SAK) are G5.

Belongs to the TRAFAC class translation factor GTPase superfamily. Classic translation factor GTPase family. IF-2 subfamily.

It localises to the cytoplasm. Functionally, one of the essential components for the initiation of protein synthesis. Protects formylmethionyl-tRNA from spontaneous hydrolysis and promotes its binding to the 30S ribosomal subunits. Also involved in the hydrolysis of GTP during the formation of the 70S ribosomal complex. The sequence is that of Translation initiation factor IF-2 from Yersinia pestis bv. Antiqua (strain Antiqua).